The following is a 362-amino-acid chain: Peptide chain release factor 1 (362 aa).

At Gln-240 the chain carries N5-methylglutamine.

The protein belongs to the prokaryotic/mitochondrial release factor family. Methylated by PrmC. Methylation increases the termination efficiency of RF1.

The protein localises to the cytoplasm. In terms of biological role, peptide chain release factor 1 directs the termination of translation in response to the peptide chain termination codons UAG and UAA. The protein is Peptide chain release factor 1 of Bifidobacterium longum subsp. infantis (strain ATCC 15697 / DSM 20088 / JCM 1222 / NCTC 11817 / S12).